A 178-amino-acid chain; its full sequence is Ribosome maturation factor RimM (178 aa).

The region spanning 98 to 178 (DGEYYWNQLE…RILVDWDPEF (81 aa)) is the PRC barrel domain.

It belongs to the RimM family. Binds ribosomal protein uS19.

It is found in the cytoplasm. In terms of biological role, an accessory protein needed during the final step in the assembly of 30S ribosomal subunit, possibly for assembly of the head region. Essential for efficient processing of 16S rRNA. May be needed both before and after RbfA during the maturation of 16S rRNA. It has affinity for free ribosomal 30S subunits but not for 70S ribosomes. The chain is Ribosome maturation factor RimM from Cellvibrio japonicus (strain Ueda107) (Pseudomonas fluorescens subsp. cellulosa).